We begin with the raw amino-acid sequence, 345 residues long: Glycerol-3-phosphate dehydrogenase [NAD(P)+] (345 aa).

NADPH is bound by residues Ser11, Trp12, His32, Arg33, and Lys106. The sn-glycerol 3-phosphate site is built by Lys106, Gly137, and Ser139. Ala141 provides a ligand contact to NADPH. Residues Lys192, Asp245, Ser255, Arg256, and Asn257 each contribute to the sn-glycerol 3-phosphate site. The active-site Proton acceptor is the Lys192. An NADPH-binding site is contributed by Arg256. The NADPH site is built by Val280 and Glu282.

The protein belongs to the NAD-dependent glycerol-3-phosphate dehydrogenase family.

It localises to the cytoplasm. It catalyses the reaction sn-glycerol 3-phosphate + NAD(+) = dihydroxyacetone phosphate + NADH + H(+). The enzyme catalyses sn-glycerol 3-phosphate + NADP(+) = dihydroxyacetone phosphate + NADPH + H(+). The protein operates within membrane lipid metabolism; glycerophospholipid metabolism. With respect to regulation, does not seem to be inhibited by sn-glycerol 3-phosphate, in contrast to the E.coli homolog enzyme which is very sensitive to allosteric inhibition by G3P. In terms of biological role, catalyzes the reduction of the glycolytic intermediate dihydroxyacetone phosphate (DHAP) to sn-glycerol 3-phosphate (G3P), the key precursor for phospholipid synthesis. This chain is Glycerol-3-phosphate dehydrogenase [NAD(P)+], found in Bacillus subtilis (strain 168).